The primary structure comprises 96 residues: MGLSFSGARPCCCRNNVLITDDGEVVSLTAHDFDVVDIESEEEGNFYVPPDMRGVTRAPGRQRLRSSDPPSRHTHRRTPGGACPATQFPPPMSDSE.

A lipid anchor (N-myristoyl glycine; by host) is attached at Gly-2. Positions 18–19 (LI) match the Di-leucine-like internalization motif motif. The segment at 37–43 (DIESEEE) is asp/Glu-rich (acidic). Ser-40 bears the Phosphoserine mark. Positions 44–96 (GNFYVPPDMRGVTRAPGRQRLRSSDPPSRHTHRRTPGGACPATQFPPPMSDSE) are disordered. Residues 87-96 (QFPPPMSDSE) show a composition bias toward pro residues.

It belongs to the herpesviridae cytoplasmic envelopment protein 3 family. Interacts with cytoplasmic envelopment protein 2; this interaction is essential for the proper localization of each protein to the assembly complex and thus for the production of infectious virus. Interacts with gE (via C-terminus). Interacts with gD (via C-terminus). Interacts with UL56. In terms of processing, myristoylation and palmitoylation (probably on one or more of the nearby cysteines at the N-terminus) enable membrane-binding and Golgi apparatus-specific targeting and are essential for efficient packaging. Post-translationally, phosphorylated. Phosphorylation does not seem to be required for recycling to the host Golgi apparatus. Packaging is selective for underphosphorylated forms.

The protein localises to the virion tegument. It is found in the virion membrane. Its subcellular location is the host cell membrane. It localises to the host Golgi apparatus membrane. In terms of biological role, plays an important role in the cytoplasmic envelopment of tegument proteins and capsids during the assembly and egress processes. Also participates in viral entry at the fusion step probably by regulating the core fusion machinery. This Homo sapiens (Human) protein is Cytoplasmic envelopment protein 3.